We begin with the raw amino-acid sequence, 492 residues long: Ribose import ATP-binding protein RbsA (492 aa).

ABC transporter domains lie at 3–239 (IDMR…VGRK) and 238–492 (RKLE…TGGK). Residue 35 to 42 (GENGAGKS) coordinates ATP.

It belongs to the ABC transporter superfamily. Ribose importer (TC 3.A.1.2.1) family. As to quaternary structure, the complex is composed of an ATP-binding protein (RbsA), two transmembrane proteins (RbsC) and a solute-binding protein (RbsB).

It is found in the cell membrane. The catalysed reaction is D-ribose(out) + ATP + H2O = D-ribose(in) + ADP + phosphate + H(+). In terms of biological role, part of the ABC transporter complex RbsABC involved in ribose import. Responsible for energy coupling to the transport system. In Streptococcus agalactiae serotype Ia (strain ATCC 27591 / A909 / CDC SS700), this protein is Ribose import ATP-binding protein RbsA.